We begin with the raw amino-acid sequence, 101 residues long: ATP-dependent Clp protease adapter protein ClpS (101 aa).

The protein belongs to the ClpS family. In terms of assembly, binds to the N-terminal domain of the chaperone ClpA.

In terms of biological role, involved in the modulation of the specificity of the ClpAP-mediated ATP-dependent protein degradation. The chain is ATP-dependent Clp protease adapter protein ClpS from Corynebacterium efficiens (strain DSM 44549 / YS-314 / AJ 12310 / JCM 11189 / NBRC 100395).